The sequence spans 557 residues: Potassium-transporting ATPase potassium-binding subunit (557 aa).

The next 12 membrane-spanning stretches (helical) occupy residues 5–25, 63–83, 132–152, 170–190, 253–273, 283–303, 329–349, 356–376, 379–399, 416–436, 484–504, and 526–546; these read GFLLIATFLLVLMVLARPLGS, LSAILGLNILGLAVLFFMLLG, GLTVQNFLSAASGIAVIFALI, LLRITLWVLTPVALLIALFFI, FVQMLAIFLIPTALCFAFGEV, LLWAMSVIFVICVGVVMWAEV, VLVSSLFAVVTTAASCGAVIA, ALGGMVPMWLMQIGEVVFGGV, GLYGMMLFVLLAVFIAGLMIG, LTALAILVTPTLVLMGAALAM, LLALCMFVGRFGVIIPVMAIA, and LFVGLLIGTVLLVGALTFIPA.

It belongs to the KdpA family. The system is composed of three essential subunits: KdpA, KdpB and KdpC.

Its subcellular location is the cell inner membrane. Its function is as follows. Part of the high-affinity ATP-driven potassium transport (or Kdp) system, which catalyzes the hydrolysis of ATP coupled with the electrogenic transport of potassium into the cytoplasm. This subunit binds the periplasmic potassium ions and delivers the ions to the membrane domain of KdpB through an intramembrane tunnel. In Escherichia coli O6:K15:H31 (strain 536 / UPEC), this protein is Potassium-transporting ATPase potassium-binding subunit.